Here is a 489-residue protein sequence, read N- to C-terminus: Protein LMBR1L (489 aa).

Topologically, residues 1-21 (MEAPDYEVLSVREQLFHERIR) are extracellular. The segment at 1–59 (MEAPDYEVLSVREQLFHERIRECIISTLLFATLYILCHIFLTRFKKPAEFTTVDDEDAT) is interaction with LGB. Residues 1-76 (MEAPDYEVLS…LCTFTLAIAL (76 aa)) form an LCN1-binding region. Residues 22–42 (ECIISTLLFATLYILCHIFLT) traverse the membrane as a helical segment. Residues 43-66 (RFKKPAEFTTVDDEDATVNKIALE) lie on the Cytoplasmic side of the membrane. A helical membrane pass occupies residues 67-87 (LCTFTLAIALGAVLLLPFSII). Residues 88–114 (SNEVLLSLPRNYYIQWLNGSLIHGLWN) lie on the Extracellular side of the membrane. The chain crosses the membrane as a helical span at residues 115–135 (LVFLFSNLSLIFLMPFAYFFT). The Cytoplasmic segment spans residues 136–154 (ESEGFAGSRKGVLGRVYET). Residues 155 to 175 (VVMLMLLTLLVLGMVWVASAI) form a helical membrane-spanning segment. Residues 176-196 (VDKNKANRESLYDFWEYYLPY) lie on the Extracellular side of the membrane. A helical membrane pass occupies residues 197 to 217 (LYSCISFLGVLLLLVCTPLGL). Over 218–305 (ARMFSVTGKL…NLGYPLAMLC (88 aa)) the chain is Cytoplasmic. A helical membrane pass occupies residues 306–326 (LLVLTGLSVLIVAIHILELLI). Residues 327–350 (DEAAMPRGMQGTSLGQVSFSKLGS) are Extracellular-facing. A helical membrane pass occupies residues 351-371 (FGAVIQVVLIFYLMVSSVVGF). Over 372 to 388 (YSSPLFRSLRPRWHDTA) the chain is Cytoplasmic. A helical membrane pass occupies residues 389-409 (MTQIIGNCVCLLVLSSALPVF). Residues 410-431 (SRTLGLTRFDLLGDFGRFNWLG) lie on the Extracellular side of the membrane. A helical transmembrane segment spans residues 432–452 (NFYIVFLYNAAFAGLTTLCLV). The Cytoplasmic segment spans residues 453–489 (KTFTAAVRAELIRAFGLDRLPLPVSGFPQASRKTQHQ).

It belongs to the LIMR family. As to quaternary structure, dimer. Can also form higher oligomers. Interacts with LCN1; this interaction mediates the endocytosis of LCN1. Interacts with UBAC2, FAF2, VCP, AMFR, ZNRF3, CTNNB1, LRP6, GSK3A and GSK3B. Interacts with DVL2 and RNF43. Interaction with SCGB1A1 has been observed in PubMed:16423471, but not in PubMed:23964685. Interaction with LGB which mediates the endocytosis of LGB has been observed in PubMed:17991420, but not in PubMed:23964685. In terms of tissue distribution, expressed in testis, pituitary gland, adrenal gland, trachea, placenta, thymus, cerebellum, stomach, mammary gland, spinal cord. A weaker expression is detected in colon, pancreas, and prostate.

The protein localises to the cell membrane. It localises to the endoplasmic reticulum membrane. Plays an essential role in lymphocyte development by negatively regulating the canonical Wnt signaling pathway. In association with UBAC2 and E3 ubiquitin-protein ligase AMFR, promotes the ubiquitin-mediated degradation of CTNNB1 and Wnt receptors FZD6 and LRP6. LMBR1L stabilizes the beta-catenin destruction complex that is required for regulating CTNNB1 levels. Acts as a LCN1 receptor and can mediate its endocytosis. The sequence is that of Protein LMBR1L (LMBR1L) from Homo sapiens (Human).